The primary structure comprises 236 residues: ATP synthase subunit a (236 aa).

5 helical membrane passes run 18-38 (STVMMLLVAAIIVFLIAFIST), 79-99 (GITLIMFIAVSNLLGLPFSIV), 112-132 (DPTVTMTLATMILVLSHFYGV), 174-194 (IYAGEILLGLLAGLASSGAVG), and 205-227 (WQGFSIFIGFIQAFIFTMLTMVY).

The protein belongs to the ATPase A chain family. In terms of assembly, F-type ATPases have 2 components, CF(1) - the catalytic core - and CF(0) - the membrane proton channel. CF(1) has five subunits: alpha(3), beta(3), gamma(1), delta(1), epsilon(1). CF(0) has three main subunits: a(1), b(2) and c(9-12). The alpha and beta chains form an alternating ring which encloses part of the gamma chain. CF(1) is attached to CF(0) by a central stalk formed by the gamma and epsilon chains, while a peripheral stalk is formed by the delta and b chains.

It localises to the cell membrane. In terms of biological role, key component of the proton channel; it plays a direct role in the translocation of protons across the membrane. This is ATP synthase subunit a from Lysinibacillus sphaericus (strain C3-41).